The chain runs to 148 residues: ATP synthase epsilon chain (148 aa).

This sequence belongs to the ATPase epsilon chain family. In terms of assembly, F-type ATPases have 2 components, CF(1) - the catalytic core - and CF(0) - the membrane proton channel. CF(1) has five subunits: alpha(3), beta(3), gamma(1), delta(1), epsilon(1). CF(0) has three main subunits: a, b and c.

It is found in the cell membrane. Its function is as follows. Produces ATP from ADP in the presence of a proton gradient across the membrane. This is ATP synthase epsilon chain from Streptococcus thermophilus (strain ATCC BAA-491 / LMD-9).